A 443-amino-acid polypeptide reads, in one-letter code: Chromosomal replication initiator protein DnaA (443 aa).

The segment at 1–80 (MTSQFASLWQ…LGESVEVRFF (80 aa)) is domain I, interacts with DnaA modulators. The interval 80–104 (FTPSADSRRSEPSRRPVATEESSPP) is domain II. Residues 83 to 105 (SADSRRSEPSRRPVATEESSPPL) are disordered. Residues 85 to 97 (DSRRSEPSRRPVA) show a composition bias toward basic and acidic residues. The domain III, AAA+ region stretch occupies residues 105 to 321 (LLNPKYTFDT…GALNRVIAYA (217 aa)). Residues Gly-149, Gly-151, Lys-152, and Thr-153 each coordinate ATP. Positions 322-443 (NLSGKSLTSE…QVLKEKIQRA (122 aa)) are domain IV, binds dsDNA.

Belongs to the DnaA family. Oligomerizes as a right-handed, spiral filament on DNA at oriC.

It localises to the cytoplasm. In terms of biological role, plays an essential role in the initiation and regulation of chromosomal replication. ATP-DnaA binds to the origin of replication (oriC) to initiate formation of the DNA replication initiation complex once per cell cycle. Binds the DnaA box (a 9 base pair repeat at the origin) and separates the double-stranded (ds)DNA. Forms a right-handed helical filament on oriC DNA; dsDNA binds to the exterior of the filament while single-stranded (ss)DNA is stabiized in the filament's interior. The ATP-DnaA-oriC complex binds and stabilizes one strand of the AT-rich DNA unwinding element (DUE), permitting loading of DNA polymerase. After initiation quickly degrades to an ADP-DnaA complex that is not apt for DNA replication. Binds acidic phospholipids. This Heliobacterium modesticaldum (strain ATCC 51547 / Ice1) protein is Chromosomal replication initiator protein DnaA.